Reading from the N-terminus, the 384-residue chain is MAP kinase-activated protein kinase 3 (384 aa).

Met1 carries the N-acetylmethionine modification. The tract at residues 1 to 22 (MDVETAEEQGGPAPPSGVPCGP) is disordered. One can recognise a Protein kinase domain in the interval 46 to 306 (QLSKQVLGLG…ITQFMNHPWI (261 aa)). Residues 52 to 60 (LGLGVNGKV) and Lys75 contribute to the ATP site. Residue Asp168 is the Proton acceptor of the active site. Position 203 is a phosphothreonine; by MAPK14 (Thr203). At Ser253 the chain carries Phosphoserine; by MAPK14. Residue Ser309 is modified to Phosphoserine; by autocatalysis. The tract at residues 309–345 (SMVVPQTPLHTARVLQEDRDHWDEVKEEMTSALATMR) is autoinhibitory helix. A Phosphothreonine; by MAPK14 modification is found at Thr315. The Nuclear export signal (NES) signature appears at 337–346 (MTSALATMRV). Residues 347 to 371 (DYDQVKIKDLKTSNNRLLNKRRKKQ) form a p38 MAPK-binding site region. 2 consecutive short sequence motifs (bipartite nuclear localization signal) follow at residues 352 to 355 (KIKD) and 366 to 370 (KRRKK). Residues 359-384 (SNNRLLNKRRKKQAGSSSGSQGCNNQ) form a disordered region. Low complexity predominate over residues 373–384 (GSSSGSQGCNNQ).

It belongs to the protein kinase superfamily. CAMK Ser/Thr protein kinase family. Heterodimer with p38-alpha/MAPK14. The heterodimer with p38-alpha/MAPK14 forms a stable complex: molecules are positioned 'face to face' so that the ATP-binding sites of both kinases are at the heterodimer interface. Interacts with TCF3 and with polycomb proteins, such as PCH2 and BMI1/PCGF4. In terms of processing, phosphorylated and activated by MAPK1/ERK2 and MAPK3/ERK1. Phosphorylated and activated by MAP kinase p38-alpha/MAPK14 at Thr-203, Ser-253 and Thr-315.

The protein resides in the nucleus. It localises to the cytoplasm. The catalysed reaction is L-seryl-[protein] + ATP = O-phospho-L-seryl-[protein] + ADP + H(+). The enzyme catalyses L-threonyl-[protein] + ATP = O-phospho-L-threonyl-[protein] + ADP + H(+). Its activity is regulated as follows. Activated following phosphorylation by p38-alpha/MAPK14 following various stresses. Inhibited by ligand 5B (2'-[2-(1,3-benzodioxol-5-yl)pyrimidin-4-yl]-5',6'-dihydrospiro[piperidine-4,7'-pyrrolo[3,2-c]pyridin]- 4'(1'h)-one) and ligand P4O (2-[2-(2-fluorophenyl)pyridin-4-yl]-1,5,6,7-tetrahydro- 4h-pyrrolo[3,2-c]pyridin-4-one), 2 ATP-competitive inhibitors. In terms of biological role, stress-activated serine/threonine-protein kinase involved in cytokines production, endocytosis, cell migration, chromatin remodeling and transcriptional regulation. Following stress, it is phosphorylated and activated by MAP kinase p38-alpha/MAPK14, leading to phosphorylation of substrates. Phosphorylates serine in the peptide sequence, Hyd-X-R-X(2)-S, where Hyd is a large hydrophobic residue. MAPKAPK2 and MAPKAPK3, share the same function and substrate specificity, but MAPKAPK3 kinase activity and level in protein expression are lower compared to MAPKAPK2. Phosphorylates HSP27/HSPB1, KRT18, KRT20, RCSD1, RPS6KA3, TAB3 and TTP/ZFP36. Mediates phosphorylation of HSP27/HSPB1 in response to stress, leading to dissociate HSP27/HSPB1 from large small heat-shock protein (sHsps) oligomers and impair their chaperone activities and ability to protect against oxidative stress effectively. Involved in inflammatory response by regulating tumor necrosis factor (TNF) and IL6 production post-transcriptionally: acts by phosphorylating AU-rich elements (AREs)-binding proteins, such as TTP/ZFP36, leading to regulate the stability and translation of TNF and IL6 mRNAs. Phosphorylation of TTP/ZFP36, a major post-transcriptional regulator of TNF, promotes its binding to 14-3-3 proteins and reduces its ARE mRNA affinity leading to inhibition of dependent degradation of ARE-containing transcript. Involved in toll-like receptor signaling pathway (TLR) in dendritic cells: required for acute TLR-induced macropinocytosis by phosphorylating and activating RPS6KA3. Also acts as a modulator of Polycomb-mediated repression. In Bos taurus (Bovine), this protein is MAP kinase-activated protein kinase 3 (MAPKAPK3).